The primary structure comprises 302 residues: UDP-3-O-acyl-N-acetylglucosamine deacetylase (302 aa).

3 residues coordinate Zn(2+): H78, H237, and D241. Catalysis depends on H264, which acts as the Proton donor.

This sequence belongs to the LpxC family. The cofactor is Zn(2+).

The catalysed reaction is a UDP-3-O-[(3R)-3-hydroxyacyl]-N-acetyl-alpha-D-glucosamine + H2O = a UDP-3-O-[(3R)-3-hydroxyacyl]-alpha-D-glucosamine + acetate. The protein operates within glycolipid biosynthesis; lipid IV(A) biosynthesis; lipid IV(A) from (3R)-3-hydroxytetradecanoyl-[acyl-carrier-protein] and UDP-N-acetyl-alpha-D-glucosamine: step 2/6. Catalyzes the hydrolysis of UDP-3-O-myristoyl-N-acetylglucosamine to form UDP-3-O-myristoylglucosamine and acetate, the committed step in lipid A biosynthesis. This is UDP-3-O-acyl-N-acetylglucosamine deacetylase from Hahella chejuensis (strain KCTC 2396).